A 300-amino-acid chain; its full sequence is Probable acetyltransferase Rv3034c (300 aa).

The signal sequence occupies residues methionine 1–alanine 25.

Belongs to the transferase hexapeptide repeat family.

May be involved in the biosynthesis of 6-O-methylglucosyl-containing lipopolysaccharides (MGLP). Functionally, regulates host peroxisome homeostasis in response to intracellular redox levels to favor mycobacterial infection in macrophage. Induces the expression of host peroxisome biogenesis and proliferation factors as well as peroxisome associated enzymes. Inhibits the induction of host pexophagy mechanism by down-regulating the expression of pexophagy associated proteins and adapter molecules in infected macrophages. However, during increased oxidative stress conditions, it induces degradation of dysfunctional and damaged peroxisomes. Regulation of peroxisome biogenesis and degradation is dependent upon host p-mTORC1 mediated signaling pathway. In Mycobacterium tuberculosis (strain ATCC 25618 / H37Rv), this protein is Probable acetyltransferase Rv3034c.